We begin with the raw amino-acid sequence, 662 residues long: ABC transporter G family member 25 (662 aa).

The segment at 1 to 30 (MSAFDGVENQMNGPDSSPRLSQDPREPRSL) is disordered. Positions 9 to 20 (NQMNGPDSSPRL) are enriched in polar residues. The N-linked (GlcNAc...) asparagine glycan is linked to N56. One can recognise an ABC transporter domain in the interval 69–308 (QKPSDETRST…FESVGFSPAF (240 aa)). 101-108 (GPSGSGKS) provides a ligand contact to ATP. N122 is a glycosylation site (N-linked (GlcNAc...) asparagine). The next 7 membrane-spanning stretches (helical) occupy residues 374-394 (VNGG…CILL), 406-426 (FDLL…LMWW), 437-457 (LGLL…NAVF), 489-509 (LSME…MVYL), 522-542 (VLLL…AAIM), 547-567 (ASTI…YYVN), and 629-649 (VIGD…FFGY). The region spanning 388–594 (SQLCILLHRL…CYRLLVAIQY (207 aa)) is the ABC transmembrane type-2 domain.

It belongs to the ABC transporter superfamily. ABCG family. Eye pigment precursor importer (TC 3.A.1.204) subfamily. Mainly expressed in vascular tissues,predominantly in phloem companion cells, with highest levels in roots and seeds, and lower levels in seedlings, stems, leaves and flowers. Mostly observed in inflorescence meristems relative to cauline leaves and developing siliques. In seeds, mainly expressed in the endosperm and, to a lesser extent, in the embryo.

The protein localises to the cell membrane. The catalysed reaction is abscisate(in) + ATP + H2O = abscisate(out) + ADP + phosphate + H(+). Its activity is regulated as follows. ADP and vanadate (ABC transporters inhibitor) inhibit the ATP-dependent abscisic acid (ABA) uptake. Functionally, high affinity abscisic acid (ABA) transporter that mediates the export of ABA, with a preference for (+)-ABA, through the plasma membrane, especially in vascular tissues (e.g. phloem companion cells), and is involved in the intercellular ABA signaling pathway. Together with ABCG31, export ABA from the endosperm to deliver it to the embryo via ABCG30 and ABCG40-mediated import to suppress radicle extension and subsequent embryonic growth. This is ABC transporter G family member 25 from Arabidopsis thaliana (Mouse-ear cress).